The primary structure comprises 45 residues: FKBP-type peptidyl-prolyl cis-trans isomerase, chloroplastic (45 aa).

Belongs to the FKBP-type PPIase family. As to expression, expressed in leaves, but not in roots.

Its subcellular location is the plastid. It is found in the chloroplast thylakoid lumen. The enzyme catalyses [protein]-peptidylproline (omega=180) = [protein]-peptidylproline (omega=0). Functionally, PPIases accelerate the folding of proteins. It catalyzes the cis-trans isomerization of proline imidic peptide bonds in oligopeptides. The sequence is that of FKBP-type peptidyl-prolyl cis-trans isomerase, chloroplastic from Vicia faba (Broad bean).